Here is a 673-residue protein sequence, read N- to C-terminus: Polyunsaturated fatty acid 5-lipoxygenase (673 aa).

One can recognise a PLAT domain in the interval 2 to 117 (PSYTVTVATG…EIVLRDGRAK (116 aa)). Ca(2+) contacts are provided by G17, T18, D19, N44, D45, E47, D79, and D80. A Lipoxygenase domain is found at 118 to 673 (LARDDQIHIL…PDRIPNSVAI (556 aa)). Residue S271 is modified to Phosphoserine. H367 and H372 together coordinate Fe cation. At S523 the chain carries Phosphoserine. H550, N554, and I673 together coordinate Fe cation.

Belongs to the lipoxygenase family. As to quaternary structure, homodimer. Interacts with ALOX5AP and LTC4S. Interacts with COTL1, the interaction is required for stability and efficient catalytic activity. Interacts with PIK3R1; this interaction bridges ALOX5 with CD40 after CD40 ligation in B cells and leads to the production of reactive oxygen species (ROS). Interacts (via PLAT domain) with DICER1 (via Dicer dsRNA-binding fold domain); this interaction enhances arachidonate 5-lipoxygenase activity and modifies the miRNA precursor processing activity of DICER1. Fe cation is required as a cofactor. Post-translationally, serine phosphorylation by MAPKAPK2 is stimulated by arachidonic acid. Phosphorylation on Ser-523 by PKA has an inhibitory effect. Phosphorylation on Ser-271 prevents export from the nucleus. Phosphorylation at Ser-523 is stimulated by 8-bromo-3',5'-cyclic AMP or prostaglandin E2.

It is found in the cytoplasm. The protein localises to the nucleus matrix. It localises to the nucleus membrane. The protein resides in the perinuclear region. Its subcellular location is the cytosol. It is found in the nucleus envelope. The protein localises to the nucleus intermembrane space. The enzyme catalyses (5Z,8Z,11Z,14Z)-eicosatetraenoate + O2 = leukotriene A4 + H2O. It catalyses the reaction 18-HEPE + O2 = (5S)-hydroperoxy-18-hydroxy-(7E,9E,11Z,14Z,16E)-eicosapentaenoate. The catalysed reaction is (18R)-hydroxy-(5Z,8Z,11Z,14Z,16E)-eicosapentaenoate + O2 = (5S)-hydroperoxy-(18R)-hydroxy-(6E,8Z,11Z,14Z,16E)-eicosapentaenoate. It carries out the reaction (18S)-hydroxy-(5Z,8Z,11Z,14Z,16E)-eicosapentaenoate + O2 = (5S)-hydroperoxy-(18S)-hydroxy-(6E,8Z,11Z,14Z,16E)-eicosapentaenoate. The enzyme catalyses (5S)-hydroperoxy-(18S)-hydroxy-(6E,8Z,11Z,14Z,16E)-eicosapentaenoate = (5S,6S)-epoxy-(18S)-hydroxy-(7E,9E,11Z,14Z,16E)-eicosapentaenoate + H2O. It catalyses the reaction (5S)-hydroperoxy-(18R)-hydroxy-(6E,8Z,11Z,14Z,16E)-eicosapentaenoate = (5S,6S)-epoxy-(18R)-hydroxy-(7E,9E,11Z,14Z,16E)-eicosapentaenoate + H2O. The catalysed reaction is (5S)-hydroperoxy-18-hydroxy-(7E,9E,11Z,14Z,16E)-eicosapentaenoate = (5S,6S)-epoxy-18-hydroxy-(7E,9E,11Z,14Z,16E)-eicosapentaenoate + H2O. It carries out the reaction (5Z,8Z,11Z,14Z)-eicosatetraenoate + O2 = (5S)-hydroperoxy-(6E,8Z,11Z,14Z)-eicosatetraenoate. The enzyme catalyses (15S)-hydroxy-(5Z,8Z,11Z,13E)-eicosatetraenoate + O2 = (5S)-hydroperoxy-(15S)-hydroxy-(6E,8Z,11Z,13E)-eicosatetraenoate. It catalyses the reaction (5S)-hydroperoxy-(6E,8Z,11Z,14Z)-eicosatetraenoate = leukotriene A4 + H2O. The catalysed reaction is (5Z,8Z,11Z,14Z)-eicosatetraenoate + O2 = (8S)-hydroperoxy-(5Z,9E,11Z,14Z)-eicosatetraenoate. It carries out the reaction (5Z,8Z,11Z,14Z)-eicosatetraenoate + O2 = (12S)-hydroperoxy-(5Z,8Z,10E,14Z)-eicosatetraenoate. The enzyme catalyses (5Z,8Z)-eicosadienoate + O2 = (5S)-hydroperoxy-(6E,8Z)-eicosadienoate. It catalyses the reaction (12S)-hydroxy-(5Z,8Z,10E,14Z)-eicosatetraenoate + O2 = (5S)-hydroperoxy-(12S)-hydroxy-(6E,8Z,10E,14Z)-eicosatetraenoate. The catalysed reaction is (5Z,8Z,11Z,14Z,17Z)-eicosapentaenoate + O2 = 5-hydroperoxy-(6E,8Z,11Z,14Z,17Z)-eicosapentaenoate. It carries out the reaction (4Z,7Z,10Z,13Z,16Z,19Z)-docosahexaenoate + O2 = (14S)-hydroperoxy-(4Z,7Z,10Z,12E,16Z,19Z)-docosahexaenoate. The enzyme catalyses (4Z,7Z,10Z,13Z,16Z,19Z)-docosahexaenoate + O2 = (7S)-hydroperoxy-(4Z,8E,10Z,13Z,16Z,19Z)-docosahexaenoate. It catalyses the reaction (4Z,7Z,10Z,13Z,16Z,19Z)-docosahexaenoate + O2 = (17S)-hydroperoxy-(4Z,7Z,10Z,13Z,15E,19Z)-docosahexaenoate. The protein operates within lipid metabolism; leukotriene A4 biosynthesis. Its function is as follows. Catalyzes the oxygenation of arachidonate to 5-hydroperoxyeicosatetraenoate (5-HPETE) followed by the dehydration to 5,6- epoxyeicosatetraenoate (Leukotriene A4/LTA4), the first two steps in the biosynthesis of leukotrienes, which are potent mediators of inflammation. Also catalyzes the oxygenation of arachidonate into 8-hydroperoxyicosatetraenoate (8-HPETE) and 12-hydroperoxyicosatetraenoate (12-HPETE). Displays lipoxin synthase activity being able to convert (15S)-HETE into a conjugate tetraene. Although arachidonate is the preferred substrate, this enzyme can also metabolize oxidized fatty acids derived from arachidonate such as (15S)-HETE, eicosapentaenoate (EPA) such as (18R)- and (18S)-HEPE or docosahexaenoate (DHA) which lead to the formation of specialized pro-resolving mediators (SPM) lipoxin and resolvins E and D respectively, therefore it participates in anti-inflammatory responses. Oxidation of DHA directly inhibits endothelial cell proliferation and sprouting angiogenesis via peroxisome proliferator-activated receptor gamma (PPARgamma). It does not catalyze the oxygenation of linoleic acid and does not convert (5S)-HETE to lipoxin isomers. In addition to inflammatory processes, it participates in dendritic cell migration, wound healing through an antioxidant mechanism based on heme oxygenase-1 (HO-1) regulation expression, monocyte adhesion to the endothelium via ITGAM expression on monocytes. Moreover, it helps establish an adaptive humoral immunity by regulating primary resting B cells and follicular helper T cells and participates in the CD40-induced production of reactive oxygen species (ROS) after CD40 ligation in B cells through interaction with PIK3R1 that bridges ALOX5 with CD40. May also play a role in glucose homeostasis, regulation of insulin secretion and palmitic acid-induced insulin resistance via AMPK. Can regulate bone mineralization and fat cell differentiation increases in induced pluripotent stem cells. The protein is Polyunsaturated fatty acid 5-lipoxygenase of Mesocricetus auratus (Golden hamster).